The sequence spans 321 residues: Polyamine aminopropyltransferase (321 aa).

The region spanning 23 to 256 is the PABS domain; the sequence is HLLYLEHAGP…DEWSFSFGSD (234 aa). Q53 is a binding site for S-methyl-5'-thioadenosine. The spermidine site is built by H84 and D108. Residues E127 and 159-160 each bind S-methyl-5'-thioadenosine; that span reads DG. D177 functions as the Proton acceptor in the catalytic mechanism.

It belongs to the spermidine/spermine synthase family. As to quaternary structure, homodimer or homotetramer.

Its subcellular location is the cytoplasm. It carries out the reaction S-adenosyl 3-(methylsulfanyl)propylamine + putrescine = S-methyl-5'-thioadenosine + spermidine + H(+). The protein operates within amine and polyamine biosynthesis; spermidine biosynthesis; spermidine from putrescine: step 1/1. Its function is as follows. Catalyzes the irreversible transfer of a propylamine group from the amino donor S-adenosylmethioninamine (decarboxy-AdoMet) to putrescine (1,4-diaminobutane) to yield spermidine. The protein is Polyamine aminopropyltransferase of Korarchaeum cryptofilum (strain OPF8).